The chain runs to 391 residues: Phosphoprotein (391 aa).

Thr10 and Thr16 each carry phosphothreonine. Polar residues predominate over residues Gln54–Gln65. Disordered stretches follow at residues Gln54–Leu97 and Pro148–Gly185. At Ser69 the chain carries Phosphoserine. Thr91, Thr150, and Thr165 each carry phosphothreonine. At Ser188 the chain carries Phosphoserine. Positions Ile216–Gly279 are multimerization. Positions Ala218–Gln245 form a coiled coil. Thr250 bears the Phosphothreonine mark. Residue Ser257 is modified to Phosphoserine. 2 positions are modified to phosphothreonine: Thr258 and Thr282. Phosphoserine occurs at positions 292 and 294. At Thr298 the chain carries Phosphothreonine. Ser301 and Ser374 each carry phosphoserine. Positions Ala343–Ile391 are interaction with the nucleoprotein. Thr375 is modified (phosphothreonine).

The protein belongs to the rubulavirus/avulavirus P protein family. In terms of assembly, homotetramer. Interacts (via multimerization domain) with polymerase L; this interaction forms the polymerase L-P complex. Interacts (via N-terminus) with N0 (via Ncore); this interaction allows P to chaperon N0 to avoid N polymerization before encapsidation. Interacts (via C-terminus) with N-RNA template; this interaction positions the polymerase on the template for both transcription and replication. Interacts with host RPS6KB1 kinase; this interaction may play a role in the viral replication and transcription.

In terms of biological role, essential cofactor of the RNA polymerase L that plays a central role in the transcription and replication by forming the polymerase complex with RNA polymerase L and recruiting L to the genomic N-RNA template for RNA synthesis. Also plays a central role in the encapsidation of nascent RNA chains by forming the encapsidation complex with the nucleocapsid protein N (N-P complex). Acts as a chaperone for newly synthesized free N protein, so-called N0, allowing encapsidation of nascent RNA chains during replication. The nucleoprotein protein N prevents excessive phosphorylation of P, which leads to down-regulation of viral transcription/ replication. Participates, together with N, in the formation of viral factories (viroplasms), which are large inclusions in the host cytoplasm where replication takes place. In Homo sapiens (Human), this protein is Phosphoprotein (P/V).